The sequence spans 160 residues: MRGLKKKRRIQIIAIAAVALTIATIMIGTAMRDGINFFRSPSEVAEAPPPESEVFRIGGLVEEGTLVRGESETTTFMVTDGGASIPVSYTGVLPDLFGENEGTVALGSMQNGVFMATEVLARHDETYMPKEVVDALKEQGVYKDPNATDADGGYGGASGS.

Residues 1–9 are Cytoplasmic-facing; sequence MRGLKKKRR. Residues 10–30 traverse the membrane as a helical; Signal-anchor for type II membrane protein segment; that stretch reads IQIIAIAAVALTIATIMIGTA. The Periplasmic portion of the chain corresponds to 31–160; that stretch reads MRDGINFFRS…DGGYGGASGS (130 aa). The heme site is built by His123 and Tyr127. The disordered stretch occupies residues 141–160; the sequence is VYKDPNATDADGGYGGASGS.

It belongs to the CcmE/CycJ family.

It is found in the cell inner membrane. Heme chaperone required for the biogenesis of c-type cytochromes. Transiently binds heme delivered by CcmC and transfers the heme to apo-cytochromes in a process facilitated by CcmF and CcmH. The polypeptide is Cytochrome c-type biogenesis protein CcmE (Dinoroseobacter shibae (strain DSM 16493 / NCIMB 14021 / DFL 12)).